The chain runs to 512 residues: MIKDMIDSIEQFAQTQADFPVYDCLGERRTYGQLKRDSDSIAAFIDSLALLAKSPVLVFGAQTYDMLATFVALTKSGHAYIPVDVHSAPERILAIIEIAKPSLIIAIEEFPLTIEGISLVSLSEIESAKLAEMPYERTHSVKGDDNYYIIFTSGTTGQPKGVQISHDNLLSFTNWMIEDAAFDVPKQPQMLAQPPYSFDLSVMYWAPTLALGGTLFALPKELVADFKQLFTTIAQLPVGIWTSTPSFADMAMLSDDFCQAKMPALTHFYFDGEELTVSTARKLFERFPSAKIINAYGPTEATVALSAIEITREMVDNYTRLPIGYPKPDSPTYIIDEDGKELSSGEQGEIIVTGPAVSKGYLNNPEKTAEAFFTFKGQPAYHTGDIGSLTEDNILLYGGRLDFQIKYAGYRIELEDVSQQLNQSPMVASAVAVPRYNKEHKVQNLLAYIVVKDGVKERFDRELELTKAIKASVKDHMMSYMMPSKFLYRDSLPLTPNGKIDIKTLINEVNNR.

An ATP-binding site is contributed by 152–153 (TS). Residue aspartate 199 coordinates D-alanine. Residue 294 to 299 (NAYGPT) participates in ATP binding. D-alanine is bound at residue valine 303. Residues aspartate 385, 397–400 (YGGR), and lysine 499 contribute to the ATP site. A D-alanine-binding site is contributed by lysine 499.

The protein belongs to the ATP-dependent AMP-binding enzyme family. DltA subfamily.

It is found in the cytoplasm. It carries out the reaction holo-[D-alanyl-carrier protein] + D-alanine + ATP = D-alanyl-[D-alanyl-carrier protein] + AMP + diphosphate. The protein operates within cell wall biogenesis; lipoteichoic acid biosynthesis. Its function is as follows. Catalyzes the first step in the D-alanylation of lipoteichoic acid (LTA), the activation of D-alanine and its transfer onto the D-alanyl carrier protein (Dcp) DltC. In an ATP-dependent two-step reaction, forms a high energy D-alanyl-AMP intermediate, followed by transfer of the D-alanyl residue as a thiol ester to the phosphopantheinyl prosthetic group of the Dcp. D-alanylation of LTA plays an important role in modulating the properties of the cell wall in Gram-positive bacteria, influencing the net charge of the cell wall. This chain is D-alanine--D-alanyl carrier protein ligase, found in Streptococcus pyogenes serotype M1.